Consider the following 228-residue polypeptide: Probable calcium-binding protein CML48 (228 aa).

2 consecutive EF-hand domains span residues 52–87 and 121–156; these read ETHP…SGYD and NCLA…LGCV. Ca(2+)-binding residues include aspartate 65, asparagine 67, serine 69, and glutamate 76.

In terms of biological role, potential calcium sensor. The polypeptide is Probable calcium-binding protein CML48 (CML48) (Arabidopsis thaliana (Mouse-ear cress)).